A 38-amino-acid chain; its full sequence is TTINVKCSLPQQCLRPCKDRFGQHAGGKCINGKCKCYP.

Cystine bridges form between cysteine 7–cysteine 29, cysteine 13–cysteine 34, and cysteine 17–cysteine 36.

As to expression, expressed by the venom gland.

The protein localises to the secreted. Functionally, inhibits human voltage-gated potassium (Kv) channels Kv1.2/KCNA2 and Kv1.3/KCNA3. Does not block human Kv1.1/KCNA1 at 100nM concentration. The sequence is that of Potassium channel toxin alpha-KTx 2.21 from Centruroides bonito (Scorpion).